Here is a 34-residue protein sequence, read N- to C-terminus: MSDIN-like toxin proprotein 4 (34 aa).

Residues 1-10 (MSDINATRLP) constitute a propeptide that is removed on maturation. The segment at residues 11-17 (VWIGYSP) is a cross-link (cyclopeptide (Val-Pro)). Positions 18 to 34 (CVGDDCIALLTRGEGLC) are excised as a propeptide.

The protein belongs to the MSDIN fungal toxin family. In terms of processing, processed by the macrocyclase-peptidase enzyme POPB to yield a toxic cyclic heptapeptide. POPB first removes 10 residues from the N-terminus. Conformational trapping of the remaining peptide forces the enzyme to release this intermediate rather than proceed to macrocyclization. The enzyme rebinds the remaining peptide in a different conformation and catalyzes macrocyclization of the N-terminal 7 residues. As to expression, expressed in basidiocarps.

Probable toxin that belongs to the MSDIN-like toxin family responsible for a large number of food poisoning cases and deaths. The polypeptide is MSDIN-like toxin proprotein 4 (Amanita exitialis (Guangzhou destroying angel)).